Here is a 585-residue protein sequence, read N- to C-terminus: Protein NRT1/ PTR FAMILY 4.6 (585 aa).

12 consecutive transmembrane segments (helical) span residues 28-48 (GMLA…AYLA), 75-95 (FMGT…AFFS), 96-116 (TFQI…ILTI), 142-162 (AMLF…KGSL), 184-204 (FFNY…TFVV), 211-231 (GWEW…LIFL), 343-363 (IVLK…CLAQ), 391-411 (IFPV…IIPF), 428-448 (IGVG…VEIK), 465-485 (LPVT…ADLF), 508-528 (SLSW…VSIV), and 554-574 (FYWL…FWAM).

Belongs to the major facilitator superfamily. Proton-dependent oligopeptide transporter (POT/PTR) (TC 2.A.17) family. As to expression, expressed in root hairs and in epidermis of both root tips and mature regions of roots. Detected in shoots, stems, flowers, siliques and imbibed seeds. Expressed in vascular tissues in cotyledons, trus leaves, hypocotyls, roots and inflorescence stems.

It localises to the cell membrane. Low-affinity proton-dependent nitrate transporter. Involved in constitutive nitrate uptake. Not involved in histidine or dipeptides transport. Involved in (+)-abscisic acid (ABA) transport, but not in gibberellin, indole-3-acetic acid or jasmonic acid import. Mediates cellular ABA uptake. Nitrate does not compete with abscisic acid as a substrate of NPF4.6. This is Protein NRT1/ PTR FAMILY 4.6 (NPF4.6) from Arabidopsis thaliana (Mouse-ear cress).